Here is a 322-residue protein sequence, read N- to C-terminus: Serine protease 38 (322 aa).

The first 28 residues, 1–28 (MAALTSGLGVLGYLLFPLLLASPTWVTS), serve as a signal peptide directing secretion. The propeptide at 29–55 (VSRRHPKSQANSLSGDVACGQPVLQGK) is activation peptide. The Peptidase S1 domain occupies 56 to 289 (LLGGEFARDR…FLSWIRYHLQ (234 aa)). A disulfide bond links Cys81 and Cys97. Active-site charge relay system residues include His96 and Asp146. The N-linked (GlcNAc...) asparagine glycan is linked to Asn176. Cystine bridges form between Cys179–Cys247, Cys210–Cys226, and Cys237–Cys265. The active-site Charge relay system is the Ser241. 2 N-linked (GlcNAc...) asparagine glycosylation sites follow: Asn250 and Asn276.

The protein belongs to the peptidase S1 family.

It localises to the secreted. In Mus musculus (Mouse), this protein is Serine protease 38 (Prss38).